A 20-amino-acid chain; its full sequence is Agglutinin beta-2 chain isoform 1 (20 aa).

The span at 1 to 10 (TQSTGTSQTI) shows a compositional bias: polar residues. Residues 1 to 20 (TQSTGTSQTIAVGLWGGPDN) form a disordered region.

Belongs to the jacalin lectin family. Tetramer of four alpha chains associated with two or four beta chains.

Its function is as follows. Alpha-methyl-D-mannoside and D-mannose specific lectin. Binds IgA. The protein is Agglutinin beta-2 chain isoform 1 of Morus nigra (Black mulberry).